A 118-amino-acid chain; its full sequence is Elongin-B (118 aa).

M1 carries the N-acetylmethionine modification. Residues 1–79 enclose the Ubiquitin-like domain; the sequence is MDVFLMIRRH…QAPATVGLAF (79 aa). A Phosphothreonine modification is found at T84. The disordered stretch occupies residues 91-118; the sequence is EPFSSPPELPDVMKPQDSGGSANEQAVQ. S108 and S111 each carry phosphoserine. Residues 108–118 show a composition bias toward polar residues; the sequence is SGGSANEQAVQ.

It belongs to the Elongin B family. As to quaternary structure, heterotrimer of an A (ELOA, ELOA2 or ELOA3P), ELOB and ELOC subunit. The elongin BC complex interacts with EPOP; leading to recruit the elongin BC complex to Polycomb group (PcG) target genes, thereby restricting excessive activity of the PRC2/EED-EZH2 complex. Component of multiple cullin-RING E3 ubiquitin-protein ligase complexes composed of Elongin BC (ELOB and ELOC), a cullin (either CUL2 or CUL5), a catalytic subunit (either RBX1 or RNF7/RBX2), as well as a substrate adapter protein that can be either ASB2, ASB9, ASB11, KLHDC2, KLHDC3, KLHDC10, APPBP2, FEM1A, FEM1B, FEM1C, LRR1, PCMTD1, SOCS1, SOCS2, SOCS5, SPSB1, SPSB3, ELOA, VHL, WSB1 or RAB40C. As part of the Elongin BC E3 ubiquitin ligase complex; interacts with NRBP1. May also interact with DCUN1D1, DCUN1D2, DCUN1D3 and DCUN1D5. May form oligomers as a KLHDC2/KLHDC3-ELOB-ELOC complex; this interaction is autoinhibitory for the E3 ligase complex as the substrate-binding site of KLHDC2/KLHDC3 is blocked in the oligomer.

It localises to the nucleus. It participates in protein modification; protein ubiquitination. Its function is as follows. SIII, also known as elongin, is a general transcription elongation factor that increases the RNA polymerase II transcription elongation past template-encoded arresting sites. Subunit A is transcriptionally active and its transcription activity is strongly enhanced by binding to the dimeric complex of the SIII regulatory subunits B and C (elongin BC complex). In embryonic stem cells, the elongin BC complex is recruited by EPOP to Polycomb group (PcG) target genes in order generate genomic region that display both active and repressive chromatin properties, an important feature of pluripotent stem cells. Functionally, core component of multiple cullin-2 and cullin-5-RING E3 ubiquitin-protein ligase complexes (ECS complexes), which mediate the ubiquitination of target proteins. By binding to BC-box motifs it seems to link target recruitment subunits, like VHL and members of the SOCS box family, to Cullin/RBX1 modules that activate E2 ubiquitination enzymes. Component the von Hippel-Lindau ubiquitination complex CBC(VHL). A number of ECS complexes (containing either KLHDC2, KLHDC3, KLHDC10, APPBP2, FEM1A, FEM1B or FEM1C as substrate-recognition component) are part of the DesCEND (destruction via C-end degrons) pathway, which recognizes a C-degron located at the extreme C terminus of target proteins, leading to their ubiquitination and degradation. The ECS(ASB9) complex mediates ubiquitination and degradation of CKB. As part of a multisubunit ubiquitin ligase complex, polyubiquitinates monoubiquitinated POLR2A. ECS(LRR1) ubiquitinates MCM7 and promotes CMG replisome disassembly by VCP and chromatin extraction during S-phase. As part of the ECS(RAB40C) complex, mediates ANKRD28 ubiquitination and degradation, thereby inhibiting protein phosphatase 6 (PP6) complex activity and focal adhesion assembly during cell migration. The protein is Elongin-B of Mus musculus (Mouse).